Consider the following 36-residue polypeptide: Pancreatic polypeptide (36 aa).

Tyrosine 36 is subject to Tyrosine amide.

This sequence belongs to the NPY family.

It localises to the secreted. Functionally, hormone secreted by pancreatic cells that acts as a regulator of pancreatic and gastrointestinal functions. The protein is Pancreatic polypeptide (PPY) of Meleagris gallopavo (Wild turkey).